The primary structure comprises 462 residues: Glucose N-acetyltransferase 1 (462 aa).

Residues Met1 to Lys18 are Cytoplasmic-facing. A helical; Signal-anchor for type II membrane protein membrane pass occupies residues Val19–Glu35. Residues Thr36–Ala462 are Lumenal-facing. Residues Asp171–Asp173 carry the DXD motif.

Belongs to the GNT1 family.

Its subcellular location is the golgi apparatus membrane. The protein localises to the vacuole membrane. Functionally, N-acetylglucosaminyltransferase involved in the Golgi-specific modification of N-linked glycans. In Candida albicans (strain SC5314 / ATCC MYA-2876) (Yeast), this protein is Glucose N-acetyltransferase 1 (GNT1).